The chain runs to 717 residues: Fatty acid oxidation complex subunit alpha (717 aa).

The interval 1-189 (MIYQSPTIEV…KVGAIDAVVA (189 aa)) is enoyl-CoA hydratase/isomerase. Residue aspartate 296 participates in substrate binding. Residues 311–717 (KKVNSAAVLG…ANNGSYYQQA (407 aa)) are 3-hydroxyacyl-CoA dehydrogenase. Residues methionine 324, aspartate 343, 400–402 (VVE), lysine 407, and serine 429 each bind NAD(+). Histidine 450 (for 3-hydroxyacyl-CoA dehydrogenase activity) is an active-site residue. Position 453 (asparagine 453) interacts with NAD(+). The substrate site is built by asparagine 500 and tyrosine 660.

This sequence in the N-terminal section; belongs to the enoyl-CoA hydratase/isomerase family. In the C-terminal section; belongs to the 3-hydroxyacyl-CoA dehydrogenase family. As to quaternary structure, heterotetramer of two alpha chains (FadB) and two beta chains (FadA).

The enzyme catalyses a (3S)-3-hydroxyacyl-CoA + NAD(+) = a 3-oxoacyl-CoA + NADH + H(+). The catalysed reaction is a (3S)-3-hydroxyacyl-CoA = a (2E)-enoyl-CoA + H2O. It carries out the reaction a 4-saturated-(3S)-3-hydroxyacyl-CoA = a (3E)-enoyl-CoA + H2O. It catalyses the reaction (3S)-3-hydroxybutanoyl-CoA = (3R)-3-hydroxybutanoyl-CoA. The enzyme catalyses a (3Z)-enoyl-CoA = a 4-saturated (2E)-enoyl-CoA. The catalysed reaction is a (3E)-enoyl-CoA = a 4-saturated (2E)-enoyl-CoA. It participates in lipid metabolism; fatty acid beta-oxidation. Its function is as follows. Involved in the aerobic and anaerobic degradation of long-chain fatty acids via beta-oxidation cycle. Catalyzes the formation of 3-oxoacyl-CoA from enoyl-CoA via L-3-hydroxyacyl-CoA. It can also use D-3-hydroxyacyl-CoA and cis-3-enoyl-CoA as substrate. The protein is Fatty acid oxidation complex subunit alpha of Shewanella pealeana (strain ATCC 700345 / ANG-SQ1).